Consider the following 91-residue polypeptide: VDAELLADGKKVFAGNCAACHLGGNNSVLADKTLKKDAIEKYLEGGLTLEAIKYQVNNGKGAMPAWADRLDEDDIEAVSNYVYDQAVNSKW.

C17, C20, H21, and M63 together coordinate heme c.

This sequence belongs to the cytochrome c family. PetJ subfamily. In terms of assembly, monomer. In terms of processing, binds 1 heme c group covalently per subunit.

It localises to the plastid. It is found in the chloroplast thylakoid lumen. Functions as an electron carrier between membrane-bound cytochrome b6-f and photosystem I in oxygenic photosynthesis. This Cladophora glomerata protein is Cytochrome c6 (petJ).